The following is a 405-amino-acid chain: Exodeoxyribonuclease 7 large subunit (405 aa).

It belongs to the XseA family. Heterooligomer composed of large and small subunits.

It localises to the cytoplasm. It carries out the reaction Exonucleolytic cleavage in either 5'- to 3'- or 3'- to 5'-direction to yield nucleoside 5'-phosphates.. Its function is as follows. Bidirectionally degrades single-stranded DNA into large acid-insoluble oligonucleotides, which are then degraded further into small acid-soluble oligonucleotides. The polypeptide is Exodeoxyribonuclease 7 large subunit (Syntrophomonas wolfei subsp. wolfei (strain DSM 2245B / Goettingen)).